A 92-amino-acid chain; its full sequence is Small ribosomal subunit protein bS20 (92 aa).

Residues 1–24 (MANTTSAKKATRKIARRTDVNKAR) form a disordered region.

The protein belongs to the bacterial ribosomal protein bS20 family.

In terms of biological role, binds directly to 16S ribosomal RNA. The polypeptide is Small ribosomal subunit protein bS20 (Rhizobium etli (strain ATCC 51251 / DSM 11541 / JCM 21823 / NBRC 15573 / CFN 42)).